The sequence spans 545 residues: CTP synthase (545 aa).

The tract at residues 1-266 (MKTKFIFITG…DQKIAIMLKL (266 aa)) is amidoligase domain. Serine 14 is a CTP binding site. UTP is bound at residue serine 14. Residues 15 to 20 (SLGKGL) and aspartate 72 each bind ATP. 2 residues coordinate Mg(2+): aspartate 72 and glutamate 140. CTP-binding positions include 147–149 (DIE), 187–192 (KTKPTQ), and lysine 223. UTP is bound by residues 187 to 192 (KTKPTQ) and lysine 223. The Glutamine amidotransferase type-1 domain maps to 291–545 (TIGIVGKYVD…IKASCENKNK (255 aa)). An L-glutamine-binding site is contributed by glycine 353. Cysteine 380 (nucleophile; for glutamine hydrolysis) is an active-site residue. L-glutamine contacts are provided by residues 381–384 (LGMQ), glutamate 404, and arginine 472. Active-site residues include histidine 518 and glutamate 520.

The protein belongs to the CTP synthase family. As to quaternary structure, homotetramer.

It carries out the reaction UTP + L-glutamine + ATP + H2O = CTP + L-glutamate + ADP + phosphate + 2 H(+). It catalyses the reaction L-glutamine + H2O = L-glutamate + NH4(+). The enzyme catalyses UTP + NH4(+) + ATP = CTP + ADP + phosphate + 2 H(+). It participates in pyrimidine metabolism; CTP biosynthesis via de novo pathway; CTP from UDP: step 2/2. With respect to regulation, allosterically activated by GTP, when glutamine is the substrate; GTP has no effect on the reaction when ammonia is the substrate. The allosteric effector GTP functions by stabilizing the protein conformation that binds the tetrahedral intermediate(s) formed during glutamine hydrolysis. Inhibited by the product CTP, via allosteric rather than competitive inhibition. In terms of biological role, catalyzes the ATP-dependent amination of UTP to CTP with either L-glutamine or ammonia as the source of nitrogen. Regulates intracellular CTP levels through interactions with the four ribonucleotide triphosphates. The protein is CTP synthase of Maridesulfovibrio salexigens (strain ATCC 14822 / DSM 2638 / NCIMB 8403 / VKM B-1763) (Desulfovibrio salexigens).